A 160-amino-acid chain; its full sequence is uncharacterized protein (160 aa).

A helical transmembrane segment spans residues 27-47 (VMNSYFIAGCGPAVCYYAVSW).

The protein resides in the membrane. This is an uncharacterized protein from Homo sapiens (Human).